Here is a 368-residue protein sequence, read N- to C-terminus: H-2 class I histocompatibility antigen, K-W28 alpha chain (368 aa).

The signal sequence occupies residues M1 to A21. The segment at G22–G111 is alpha-1. The Extracellular portion of the chain corresponds to G22–T305. N107 is a glycosylation site (N-linked (GlcNAc...) asparagine). Residues G112–T203 are alpha-2. C122 and C185 form a disulfide bridge. N197 is a glycosylation site (N-linked (GlcNAc...) asparagine). The tract at residues D204 to W295 is alpha-3. The region spanning P206–T292 is the Ig-like C1-type domain. A disulfide bridge connects residues C224 and C280. The interval E296–T305 is connecting peptide. A helical membrane pass occupies residues V306–M329. The Cytoplasmic portion of the chain corresponds to R330–A368. Phosphoserine is present on residues S350 and S353.

It belongs to the MHC class I family. Heterodimer of an alpha chain and a beta chain (beta-2-microglobulin).

It is found in the membrane. Involved in the presentation of foreign antigens to the immune system. The polypeptide is H-2 class I histocompatibility antigen, K-W28 alpha chain (H2-K1) (Mus musculus (Mouse)).